Reading from the N-terminus, the 400-residue chain is NADH-quinone oxidoreductase subunit D (400 aa).

The protein belongs to the complex I 49 kDa subunit family. NDH-1 is composed of 14 different subunits. Subunits NuoB, C, D, E, F, and G constitute the peripheral sector of the complex.

It is found in the cell inner membrane. The enzyme catalyses a quinone + NADH + 5 H(+)(in) = a quinol + NAD(+) + 4 H(+)(out). Its function is as follows. NDH-1 shuttles electrons from NADH, via FMN and iron-sulfur (Fe-S) centers, to quinones in the respiratory chain. The immediate electron acceptor for the enzyme in this species is believed to be a menaquinone. Couples the redox reaction to proton translocation (for every two electrons transferred, four hydrogen ions are translocated across the cytoplasmic membrane), and thus conserves the redox energy in a proton gradient. This Chlorobium phaeovibrioides (strain DSM 265 / 1930) (Prosthecochloris vibrioformis (strain DSM 265)) protein is NADH-quinone oxidoreductase subunit D.